Consider the following 968-residue polypeptide: MPFTLGQRWISDTESELGLGTVVAMDARTVTLLFPSTGENRLYARSDSPVTRVMFNPGDTITSHEGWQLHIDEVKEENGLLVYVGTRLDTEETNVTLREVLLDSKLVFSKPQDRLFAGQIDRMDRFALRYRARKFQSEQYRMPYSGLRGQRTNLIPHQLNIAHDVGRRHAPRVLLADEVGLGKTIEAGMILHQQLLSGAAERVLIIVPETLQHQWLVEMLRRFNLRFALFDDERYTEAQHDAYNPFETEQLVICSLDFARRNKQRLEHLCDAEWDLLVVDEAHHLVWSTDAPSREYMAIEQLAERVPGVLLLTATPEQLGMESHFARLRLLDPNRFHDFEQFVEEQKNYRPVADAVAMLLAGNKLSNDELNRLGDLIGEQDIEPLLQAANSDRDDAQAARDELVSMLMDRHGTSRVLFRNTRNGVKGFPKRELHTVKLPLPTQYQTAIKVSGIMGARKSAEDRARDMLYPEQIYQEFEGDTGTWWNFDPRVEWLMGYLTSHRSQKVLVICTKATTALQLEQVLREREGIRAAVFHEGMSIIERDRAAAWFAEEDTGAQVLLCSEIGSEGRNFQFASNLVMFDLPFNPDLLEQRIGRLDRIGQAHDIQIHVPYLEKTAQSVLVRWYHEGLDAFEHTCPTGRAIYDSAYASLINYLAAPEETDGFDDLIKSCREQHEALKAQLEQGRDRLLEIHSNGGEKAQQLAQSIEEQDDDTNLIAFAMNLFDIVGINQDDRGDNLIVLTPSDHMLVPDFPGLPEDGCTITFERDVALSREDAQFITWEHPLIRNGLDLILSGDTGSSTISLLKNKALPVGTLLVELVYVVEAQAPKQLQLNRFLPPTPVRMLLDKNGNNLAAQVEFETFNRQLSAVNRHTGSKLVNAVQQDVHAILQLGETQIEKSARALIDNARREADEKLSGELSRLEALRAVNPNIRDDELAAIDSNRQQVLESLNQAGWRLDALRLIVVTHQ.

One can recognise a Helicase ATP-binding domain in the interval 164–334 (DVGRRHAPRV…FARLRLLDPN (171 aa)). 177–184 (DEVGLGKT) is an ATP binding site. A DEAH box motif is present at residues 280-283 (DEAH). Positions 490 to 685 (RVEWLMGYLT…ALKAQLEQGR (196 aa)) constitute a Helicase C-terminal domain.

This sequence belongs to the SNF2/RAD54 helicase family. RapA subfamily. As to quaternary structure, interacts with the RNAP. Has a higher affinity for the core RNAP than for the holoenzyme. Its ATPase activity is stimulated by binding to RNAP.

Functionally, transcription regulator that activates transcription by stimulating RNA polymerase (RNAP) recycling in case of stress conditions such as supercoiled DNA or high salt concentrations. Probably acts by releasing the RNAP, when it is trapped or immobilized on tightly supercoiled DNA. Does not activate transcription on linear DNA. Probably not involved in DNA repair. The protein is RNA polymerase-associated protein RapA of Salmonella paratyphi C (strain RKS4594).